The following is a 1150-amino-acid chain: Rho-type GTPase-activating protein 1 (1150 aa).

Residues 1-10 show a composition bias toward basic and acidic residues; it reads MSQRDAKKDG. The segment at 1-78 is disordered; it reads MSQRDAKKDG…AESRKALPNQ (78 aa). Residues 40–62 are compositionally biased toward polar residues; it reads TTKNFPHSRHTSTVAGTEGGSSL. 3 consecutive LIM zinc-binding domains span residues 114-177, 178-238, and 483-546; these read KICA…RRLD, LLCA…LFAA, and DLCY…SSNV. The disordered stretch occupies residues 586–683; the sequence is SQRKPLSVDP…SHGGSITGKS (98 aa). The span at 598–617 shows a compositional bias: polar residues; it reads ENVSSTVETAKQAETTASSD. Residues 642 to 655 show a composition bias toward low complexity; that stretch reads SNETQSSSNSTETS. Serine 690 is subject to Phosphoserine. The tract at residues 726 to 759 is disordered; it reads AFRHMPSYTDPSYRKNSGAIYDKNDGTQKGLTPK. One can recognise a Rho-GAP domain in the interval 837-1038; sequence VPLEILVERN…LLIENFEKFC (202 aa). 2 disordered regions span residues 1078–1097 and 1104–1150; these read LDER…RQPI and LTSD…IRDS. Over residues 1088-1097 the composition is skewed to basic residues; that stretch reads ASTKRKRQPI. A compositionally biased stretch (polar residues) spans 1104–1134; that stretch reads LTSDVPSGSEVADTNSLSSTTKDEASPNSDA.

The protein localises to the cell tip. Its subcellular location is the nucleus. Its function is as follows. GTPase-activating protein for Rho1. Involved in the F-actin patch localization, cell morphogenesis, regulation of septation, and cell wall synthesis. This chain is Rho-type GTPase-activating protein 1 (rga1), found in Schizosaccharomyces pombe (strain 972 / ATCC 24843) (Fission yeast).